Consider the following 299-residue polypeptide: Probable adenylate kinase 7, mitochondrial (299 aa).

The transit peptide at 1 to 25 (MAGVLRLAGAARSPLARALAPAARR) directs the protein to the mitochondrion. Residue 80–85 (GPQKHA) participates in ATP binding. Positions 100 to 129 (SMGTLVRQELSPASSLYKKIANSVNEGKLV) are NMP. Residues arginine 106, 127-129 (KLV), 157-160 (GIPR), and glutamine 164 contribute to the AMP site. ATP-binding positions include arginine 190 and 203-204 (LF). Residues 193–237 (GGDICPHCGQLFDFSKTASSDRNPSLGSCTWPSQVQHAAVLGLED) are LID.

It belongs to the adenylate kinase family.

It is found in the mitochondrion. It carries out the reaction AMP + ATP = 2 ADP. Catalyzes the reversible transfer of the terminal phosphate group between ATP and AMP. Plays an important role in cellular energy homeostasis and in adenine nucleotide metabolism. This is Probable adenylate kinase 7, mitochondrial from Oryza sativa subsp. japonica (Rice).